The primary structure comprises 329 residues: MPVDISSLLHAGYSNPLLREWQGVRPITKSSLMYPIFISEIDDAKEAIDSMPNQFRWGVNRLEEFLGPLVKKGLRSVILFGVIESKKDYCGSMADSENGPVIKAVKEIRHLFPELVVACDVCLCEYTDHGHCGLLYEDGTINNAKSVERIAEVSGNYALAGAQIISPSDCMDGRVKAIKQKLVELELSHKVCVISYSAKFASGFFGPFRAAANGAPKFGDRSCYQLPCNARGLAKRAILRDVREGADGIMVKPGTPYLDILAMASKLADDLPIATYQVSGEFAIIHAAAAAGVFELKRHVMETMDGFMRAGANIVLTYFTPELLEWLEY.

Zn(2+) contacts are provided by C122, C124, and C132. The active-site Schiff-base intermediate with substrate is K199. 5-aminolevulinate is bound by residues R209 and R221. K252 (schiff-base intermediate with substrate) is an active-site residue. 2 residues coordinate 5-aminolevulinate: S279 and Y318.

It belongs to the ALAD family. As to quaternary structure, homooctamer. Requires Zn(2+) as cofactor.

The enzyme catalyses 2 5-aminolevulinate = porphobilinogen + 2 H2O + H(+). It functions in the pathway porphyrin-containing compound metabolism; protoporphyrin-IX biosynthesis; coproporphyrinogen-III from 5-aminolevulinate: step 1/4. Its function is as follows. Catalyzes an early step in the biosynthesis of tetrapyrroles. Binds two molecules of 5-aminolevulinate per subunit, each at a distinct site, and catalyzes their condensation to form porphobilinogen. The chain is Delta-aminolevulinic acid dehydratase (hem2) from Schizosaccharomyces pombe (strain 972 / ATCC 24843) (Fission yeast).